The following is a 284-amino-acid chain: WUSCHEL-related homeobox 10 (284 aa).

The disordered stretch occupies residues 1 to 43 (MDRTATASWEVMSRRGEQQQQLMMQAPASHNGGSGGGEPARSR). The segment at residues 39 to 103 (PARSRWAPKP…NRRSRSRRRA (65 aa)) is a DNA-binding region (homeobox; WUS-type).

The protein belongs to the WUS homeobox family.

The protein localises to the nucleus. In terms of biological role, transcription factor which may be involved in developmental processes. This chain is WUSCHEL-related homeobox 10 (WOX10), found in Oryza sativa subsp. japonica (Rice).